Consider the following 88-residue polypeptide: UPF0335 protein M446_5200 (88 aa).

Belongs to the UPF0335 family.

The chain is UPF0335 protein M446_5200 from Methylobacterium sp. (strain 4-46).